The following is a 524-amino-acid chain: uncharacterized protein (524 aa).

The first 26 residues, 1 to 26 (MLKIDMWFKLKSLGFSLISLQALLAS), serve as a signal peptide directing secretion. Residue cysteine 27 is the site of N-palmitoyl cysteine attachment. Cysteine 27 carries S-diacylglycerol cysteine lipidation. Residues 37-68 (IEEKNDSTTDNNATPFKDEQSDQGTEVNQQPK) form a disordered region. Residues 58–68 (DQGTEVNQQPK) are compositionally biased toward polar residues.

The protein belongs to the MG067/MG068/MG395 family.

It localises to the cell membrane. This is an uncharacterized protein from Mycoplasma genitalium (strain ATCC 33530 / DSM 19775 / NCTC 10195 / G37) (Mycoplasmoides genitalium).